A 616-amino-acid polypeptide reads, in one-letter code: Chaperone protein HscA (616 aa).

This sequence belongs to the heat shock protein 70 family.

In terms of biological role, chaperone involved in the maturation of iron-sulfur cluster-containing proteins. Has a low intrinsic ATPase activity which is markedly stimulated by HscB. Involved in the maturation of IscU. This is Chaperone protein HscA from Salmonella paratyphi B (strain ATCC BAA-1250 / SPB7).